The sequence spans 110 residues: MVQGRTVLFRTAEGAKLFSAVAKCAVAFEADDHNVAEGWSVIVKVRAQVLTTDAGVREAERAQLLPWTATLKRHCVRVIPWEITGRHFRFGPEPDRSQTFACEASSHNQR.

This is an uncharacterized protein from Mycobacterium tuberculosis (strain CDC 1551 / Oshkosh).